The sequence spans 253 residues: tRNA pseudouridine synthase A (253 aa).

Asp-53 acts as the Nucleophile in catalysis. Tyr-111 contacts substrate.

It belongs to the tRNA pseudouridine synthase TruA family. As to quaternary structure, homodimer.

The enzyme catalyses uridine(38/39/40) in tRNA = pseudouridine(38/39/40) in tRNA. Functionally, formation of pseudouridine at positions 38, 39 and 40 in the anticodon stem and loop of transfer RNAs. The chain is tRNA pseudouridine synthase A from Oceanobacillus iheyensis (strain DSM 14371 / CIP 107618 / JCM 11309 / KCTC 3954 / HTE831).